Consider the following 196-residue polypeptide: Carnitine operon protein CaiE (196 aa).

The tract at residues 173–196 is disordered; that stretch reads TQPLRQMEGNRPRLQGTTDVAPKR.

It belongs to the transferase hexapeptide repeat family.

It participates in amine and polyamine metabolism; carnitine metabolism. In terms of biological role, overproduction of CaiE stimulates the activity of CaiB and CaiD. This chain is Carnitine operon protein CaiE, found in Escherichia coli (strain SMS-3-5 / SECEC).